Here is a 168-residue protein sequence, read N- to C-terminus: Phosphopantetheine adenylyltransferase (168 aa).

Substrate is bound at residue T9. ATP-binding positions include 9 to 10 and H17; that span reads TF. Residues K41, L73, and R87 each coordinate substrate. ATP-binding positions include 88–90, E98, and 123–129; these read GLR and YQFISGT.

Belongs to the bacterial CoaD family. Homohexamer. Mg(2+) is required as a cofactor.

It localises to the cytoplasm. The enzyme catalyses (R)-4'-phosphopantetheine + ATP + H(+) = 3'-dephospho-CoA + diphosphate. It participates in cofactor biosynthesis; coenzyme A biosynthesis; CoA from (R)-pantothenate: step 4/5. Reversibly transfers an adenylyl group from ATP to 4'-phosphopantetheine, yielding dephospho-CoA (dPCoA) and pyrophosphate. The polypeptide is Phosphopantetheine adenylyltransferase (Paraburkholderia phymatum (strain DSM 17167 / CIP 108236 / LMG 21445 / STM815) (Burkholderia phymatum)).